The following is a 539-amino-acid chain: NADH-quinone oxidoreductase subunit N 2 (539 aa).

13 helical membrane-spanning segments follow: residues 11-31, 52-72, 106-126, 141-161, 193-213, 248-268, 296-316, 329-349, 357-377, 385-405, 429-449, 462-484, and 500-520; these read LIPE…DVLT, LMGL…FSWM, PLTH…VILT, LILF…LIMI, YIFG…LLGL, GVAI…VAIV, AGFF…SILG, WTSL…LAAL, MLAY…VGTQ, LMYL…LALV, LLLT…GFFV, AKWL…LRFL, and VGFG…GLGI.

It belongs to the complex I subunit 2 family. As to quaternary structure, NDH-1 is composed of 14 different subunits. Subunits NuoA, H, J, K, L, M, N constitute the membrane sector of the complex.

It is found in the cell membrane. It carries out the reaction a quinone + NADH + 5 H(+)(in) = a quinol + NAD(+) + 4 H(+)(out). In terms of biological role, NDH-1 shuttles electrons from NADH, via FMN and iron-sulfur (Fe-S) centers, to quinones in the respiratory chain. The immediate electron acceptor for the enzyme in this species is believed to be ubiquinone. Couples the redox reaction to proton translocation (for every two electrons transferred, four hydrogen ions are translocated across the cytoplasmic membrane), and thus conserves the redox energy in a proton gradient. The sequence is that of NADH-quinone oxidoreductase subunit N 2 from Herpetosiphon aurantiacus (strain ATCC 23779 / DSM 785 / 114-95).